The sequence spans 397 residues: Staphylopine export protein (397 aa).

The next 12 membrane-spanning stretches (helical) occupy residues Leu-12–Leu-32, Gly-38–Phe-58, Ile-77–Tyr-97, Val-102–Ala-122, Leu-134–Trp-154, Asn-158–Tyr-178, Gly-217–Tyr-237, Val-239–Ala-259, Leu-285–Tyr-305, Ile-309–Val-329, Met-337–Met-357, and Leu-363–Met-383.

Belongs to the major facilitator superfamily.

Its subcellular location is the cell membrane. Functionally, involved in the export of the metallophore staphylopine. This is Staphylopine export protein from Staphylococcus aureus (strain Mu50 / ATCC 700699).